Consider the following 189-residue polypeptide: Casparian strip membrane protein 1 (189 aa).

Topologically, residues 1-42 (MEKNESSAIEIAESSKERKGKAPLLAAAVGHDRAAGYKRGVS) are cytoplasmic. A helical transmembrane segment spans residues 43–63 (IFDLILRISAATAALAATIVM). The Extracellular portion of the chain corresponds to 64–90 (GTTEQTLPFFTQFFQFRAQYDDLPTFT). The chain crosses the membrane as a helical span at residues 91-111 (FFVVGMAIVTGYLILSVPLSI). Over 112-130 (VCIARPVAIGPRFLLIVCD) the chain is Cytoplasmic. The helical transmembrane segment at 131–151 (TVTAVLATSAAGSSAAIVYLA) threads the bilayer. The Extracellular portion of the chain corresponds to 152–189 (HNGNSDANWLAICQQFNDFCQRVSGAVVAAFVAVVCSS).

The protein belongs to the Casparian strip membrane proteins (CASP) family. In terms of assembly, homodimer and heterodimers.

The protein resides in the cell membrane. In terms of biological role, regulates membrane-cell wall junctions and localized cell wall deposition. Required for establishment of the Casparian strip membrane domain (CSD) and the subsequent formation of Casparian strips, a cell wall modification of the root endodermis that determines an apoplastic barrier between the intraorganismal apoplasm and the extraorganismal apoplasm and prevents lateral diffusion. The chain is Casparian strip membrane protein 1 from Striga asiatica (Asiatic witchweed).